The chain runs to 323 residues: MAETIGSEVSSMSDKSAKIFVAGHRGLVGSAIVRKLQEQGFTNLVLKTHAELDLTRQADVESFFSQEKPVYVILAAAKVGGIHANNTYPADFIGVNLQIQTNVIHSAYEHGVKKLLFLGSSCIYPKFAPQPIPESALLTASLEPTNEWYAIAKIAGIKTCQAYRIQHGWDAISGMPTNLYGPNDNFHPENSHVLPALMRRFHEAKVNGAEEVVVWGTGSPLREFLHVDDLADACVFLLDRYSGLEHVNIGSGQEVTIRELAELVKEVVGFEGKLGWDCTKPDGTPRKLMDSSKLASLGWTPKVSLRDGLSQTYDWYLKNVCNR.

Ala-2 carries the N-acetylalanine modification. Residue Gly-23–Gly-29 coordinates NADP(+). The active-site Proton donor/acceptor is Tyr-149. NADP(+)-binding positions include Lys-153, Pro-176–Leu-179, and His-192. Arg-200, Trp-215, Arg-222, and Asp-282 together coordinate substrate.

Belongs to the NAD(P)-dependent epimerase/dehydratase family. Fucose synthase subfamily. As to quaternary structure, binds and stabilizes MUR1. Homodimer. In terms of tissue distribution, highly expressed in roots and flowers, less abundant in leaves, stems and siliques.

The catalysed reaction is GDP-beta-L-fucose + NADP(+) = GDP-4-dehydro-alpha-D-rhamnose + NADPH + H(+). It participates in nucleotide-sugar biosynthesis; GDP-L-fucose biosynthesis via de novo pathway; GDP-L-fucose from GDP-alpha-D-mannose: step 2/2. In terms of biological role, catalyzes the two-step NADP-dependent conversion of GDP-4-dehydro-6-deoxy-D-mannose to GDP-fucose, involving an epimerase and a reductase reaction. Not involved in the synthesis of GDP-L-galactose from GDP-D-mannose. This Arabidopsis thaliana (Mouse-ear cress) protein is GDP-L-fucose synthase 1 (GER1).